Here is a 1630-residue protein sequence, read N- to C-terminus: Merozoite surface protein 1 (1630 aa).

An N-terminal signal peptide occupies residues 1 to 19 (MKIIFFLCSFLFFIINTQC). The disordered stretch occupies residues 60–113 (TKGASAQSGTSGTSGTSGPSGPSGTSPSSRSNTLPRSNTSSGASPPADASDSDA). The tripeptide SG(TP) repeat stretch occupies residues 67 to 84 (SGTSGTSGTSGPSGPSGT). Low complexity predominate over residues 67–88 (SGTSGTSGTSGPSGPSGTSPSS). Over residues 89–98 (RSNTLPRSNT) the composition is skewed to polar residues. Asn97 carries N-linked (GlcNAc...) asparagine glycosylation. The segment covering 99–108 (SSGASPPADA) has biased composition (low complexity). Asn259 is a glycosylation site (N-linked (GlcNAc...) asparagine). Residues 680 to 755 (KKNIKTEGQS…VPTPPAPVNN (76 aa)) are disordered. Composition is skewed to polar residues over residues 685–695 (TEGQSDNSEPS) and 702–713 (GQATTKPGQQAG). Residues 721–732 (VQAQAQEQKQAQ) show a composition bias toward low complexity. N-linked (GlcNAc...) asparagine glycans are attached at residues Asn755, Asn759, Asn774, and Asn835. Residues 884–906 (SMQPLSLTPQDKPEVSANDDTSH) are disordered. Residues Asn911, Asn955, Asn1049, Asn1156, and Asn1165 are each glycosylated (N-linked (GlcNAc...) asparagine). Residues 993–1107 (QLSFDLYNKY…EESIQTEDNY (115 aa)) are required for binding to host erythrocyte cell membrane. Polar residues predominate over residues 1190 to 1203 (VSESGSDTLEQSQP). Positions 1190-1220 (VSESGSDTLEQSQPKKPASTHVGAESNTITT) are disordered. N-linked (GlcNAc...) asparagine glycans are attached at residues Asn1436 and Asn1517. EGF-like domains follow at residues 1521 to 1561 (HQCV…VENP) and 1562 to 1610 (NPTC…FCSS). Intrachain disulfides connect Cys1523–Cys1534, Cys1528–Cys1544, Cys1546–Cys1557, Cys1565–Cys1578, Cys1572–Cys1592, and Cys1594–Cys1608. Ser1609 is lipidated: GPI-anchor amidated serine. A propeptide spans 1610–1630 (SSNFLGISFLLILMLILYSFI) (removed in mature form).

Forms a complex composed of subunits p83, p30, p38, and p42 which remain non-covalently associated; the complex is formed at the merozoite surface prior to egress from host erythrocytes. Forms a complex composed of processed MSP1 subunits, MSP6 subunit p36 and MSP7; the complex is formed at the merozoite surface prior to egress from host erythrocytes. Within the complex, interacts (via subunit p38) with MSP6 subunit p36 and (via subunits p83, p30 and p38) with MSP7 (via subunit p22). Forms a complex composed of MSP1, MSP6, DBLMSP1 and DBLMSP2. Within the complex, interacts (via subunit p38) with DBLMSP1 and DBLMSP2. Forms a complex composed of MSP1, and rhoptry proteins RhopH3, RAP1 and CLAG9/RhopH3. Within the complex, interacts (via subunits p42 and p19) with RhopH3 (via C-terminus). Forms a complex composed of MSP1, MSP6, MSP7, MSP9 and MSP3; within the complex, MSP6 and MSP9 mediate the binding to the host erythrocyte. Interacts (via subunits p19 and p42) with MSP9; the interaction is direct; MSP1 subunits p19 or p42, and MSP9 form a co-ligand complex that interacts with host SLC4A1/Band 3 protein. May interact with PFD6. Interacts with host spectrin. In terms of assembly, interacts with host glycophorin GYPA in a sialic acid-independent manner. As to quaternary structure, interacts with host proinflammatory cytokine S100P; the interaction blocks S100P inflammatory and chemotactic activities. Interacts with host SLC4A1/Band 3 (via 5ABC region) on the host erythrocyte surface in a sialic acid-independent manner. The p190 precursor is cleaved by SUB1 prior to merozoite egress into 4 subunits p83, p30, p38, and p42 which remain non-covalently associated. SUB1-mediated proteolytic cleavage occurs in an orderly manner; the first cleavage occurs at the p83/p30 site, followed by cleavage at the p30/p38 site, the last cleavage occurs at the p38/p42 site. The order of cleavage is essential for parasite viability. SUB1-mediated processing is essential for merozoite egress. In a second processing step during erythrocyte invasion, p42 is cleaved by SUB2 into p33 and p19; the latter remains attached to the merozoite surface via its GPI-anchor and stays on the surface during the subsequent ring stage.

Its subcellular location is the cell membrane. It is found in the secreted. The protein localises to the vacuole membrane. In terms of biological role, during the asexual blood stage, involved in merozoite egress from host erythrocytes possibly via its interaction with the host cytoskeleton protein spectrin resulting in the destabilization of the host cytoskeleton and thus leading to erythrocyte cell membrane rupture. Involved in the binding to host erythrocytes and is required for host erythrocyte invasion. Its function is as follows. By binding to host proinflammatory cytokine S100P may interfere with host immune responses. Involved in merozoite invasion of host erythrocytes. May play a role in the biogenesis and/or function of the food vacuole during the intraerythrocytic development. The protein is Merozoite surface protein 1 of Plasmodium falciparum (isolate K1 / Thailand).